A 421-amino-acid polypeptide reads, in one-letter code: Testin (421 aa).

Positions 92 to 199 (MILTNPVAAK…GDVKLPREMD (108 aa)) constitute a PET domain. A disordered region spans residues 133–164 (EKQPVAGSEGAQYRKKQLAKQLPAHDQDPSKC). A compositionally biased stretch (basic and acidic residues) spans 155–164 (PAHDQDPSKC). LIM zinc-binding domains are found at residues 234–297 (YSCY…CDSE), 299–359 (PRCA…NHAV), and 362–421 (QGCH…KMMS).

Belongs to the prickle / espinas / testin family. In terms of assembly, interacts via LIM domain 1 with ZYX. Interacts (via LIM domain 3) with ENAH and VASP. Interacts with ALKBH4, talin, actin, alpha-actinin, GRIP1 and PXN. Interacts (via LIM domain 2) with ACTL7A (via N-terminus). Heterodimer with ACTL7A; the heterodimer interacts with ENAH to form a heterotrimer.

It localises to the cytoplasm. It is found in the cell junction. The protein localises to the focal adhesion. Scaffold protein that may play a role in cell adhesion, cell spreading and in the reorganization of the actin cytoskeleton. Plays a role in the regulation of cell proliferation. May act as a tumor suppressor. This is Testin (TES) from Neofelis nebulosa (Clouded leopard).